A 1219-amino-acid chain; its full sequence is FK506-binding protein 15 (1219 aa).

Position 1 is an N-acetylmethionine (Met-1). A phosphoserine mark is found at Ser-14 and Ser-23. The disordered stretch occupies residues 41 to 66 (YTAPKQPKKGQGTAATGNQATPKTAP). The span at 53-66 (TAATGNQATPKTAP) shows a compositional bias: polar residues. The segment at 72-169 (PTILVATAVH…AVEFNKQVCI (98 aa)) is important for function in growth cone organization. Position 92 is an N6-acetyllysine (Lys-92). Residues 197–290 (GDSLEVAYTG…VFEVEVRRVK (94 aa)) form the PPIase FKBP-type domain. Residues 294-349 (DSGSDGHSVSSRDSAAPSPIPGADNLSADPVVSPPTSIPFKSGEPALRTKSNSLSE) form a disordered region. Residues Ser-307, Ser-311, Ser-326, Ser-344, Ser-346, and Ser-356 each carry the phosphoserine modification. The disordered stretch occupies residues 381–433 (PQLDSNDSEIEDVNTLQGGGQPVVTPSVQPSLHPAHPALPQMTSQAPQPSVTG). The span at 421 to 433 (QMTSQAPQPSVTG) shows a compositional bias: polar residues. Coiled coils occupy residues 522 to 789 (AVSK…TDQA), 818 to 878 (DEHL…GVEA), and 925 to 951 (TLQL…AEER). A Phosphoserine modification is found at Ser-619. Positions 739–761 (LEKNLSERKKKSAQERSQAEEEI) are disordered. Residues 931-1219 (QQEQEKEESS…DDDDDIDWLG (289 aa)) form a disordered region. Phosphoserine occurs at positions 939, 940, 941, and 956. A compositionally biased stretch (low complexity) spans 957–971 (QEQSASASSGQPQAP). Ser-979, Ser-1024, Ser-1056, Ser-1061, Ser-1065, and Ser-1097 each carry phosphoserine. Over residues 1090-1100 (QESSTRLSLTS) the composition is skewed to polar residues. Residue Thr-1099 is modified to Phosphothreonine. At Ser-1114 the chain carries Phosphoserine. The segment covering 1123-1139 (LKKDDVTSSTGPHKELS) has biased composition (basic and acidic residues). Ser-1158, Ser-1161, Ser-1162, Ser-1164, and Ser-1195 each carry phosphoserine. At Thr-1203 the chain carries Phosphothreonine. Over residues 1207 to 1219 (GDDDDDDDIDWLG) the composition is skewed to acidic residues.

It belongs to the FKBP-type PPIase family. Interacts with WIP and actin. Interacts with TBC1D23.

It is found in the cytoplasm. The protein localises to the cell projection. It localises to the axon. Its subcellular location is the early endosome. Its function is as follows. May be involved in the cytoskeletal organization of neuronal growth cones. Seems to be inactive as a PPIase. Involved in the transport of early endosomes at the level of transition between microfilament-based and microtubule-based movement. This chain is FK506-binding protein 15 (FKBP15), found in Homo sapiens (Human).